A 354-amino-acid polypeptide reads, in one-letter code: Peptide chain release factor 1 (354 aa).

At glutamine 231 the chain carries N5-methylglutamine.

It belongs to the prokaryotic/mitochondrial release factor family. Post-translationally, methylated by PrmC. Methylation increases the termination efficiency of RF1.

It localises to the cytoplasm. Peptide chain release factor 1 directs the termination of translation in response to the peptide chain termination codons UAG and UAA. The protein is Peptide chain release factor 1 of Acholeplasma laidlawii (strain PG-8A).